The primary structure comprises 248 residues: Tropomyosin alpha-4 chain (248 aa).

At alanine 2 the chain carries N-acetylalanine. A coiled-coil region spans residues alanine 2–isoleucine 248. Position 6 is a phosphoserine (serine 6). A disordered region spans residues glutamine 15–glycine 47. Basic and acidic residues predominate over residues arginine 33–glycine 47. An N6-acetyllysine mark is found at lysine 177 and lysine 215. The residue at position 216 (threonine 216) is a Phosphothreonine.

Belongs to the tropomyosin family. In terms of assembly, homodimer. Heterodimer of an alpha (TPM1, TPM3 or TPM4) and a beta (TPM2) chain. In terms of tissue distribution, detected in cardiac tissue and platelets, the form found in cardiac tissue is a higher molecular weight than the form found in platelets. Expressed at higher levels in the platelets of hypertensive patients with cardiac hypertrophy than in the platelets of hypertensive patients without cardiac hypertrophy (at protein level).

Its subcellular location is the cytoplasm. The protein resides in the cytoskeleton. In terms of biological role, binds to actin filaments in muscle and non-muscle cells. Plays a central role, in association with the troponin complex, in the calcium dependent regulation of vertebrate striated muscle contraction. Smooth muscle contraction is regulated by interaction with caldesmon. In non-muscle cells is implicated in stabilizing cytoskeleton actin filaments. Binds calcium. Plays a role in platelet biogenesis. In Homo sapiens (Human), this protein is Tropomyosin alpha-4 chain (TPM4).